Consider the following 126-residue polypeptide: Aspartate 1-decarboxylase (126 aa).

Ser-25 (schiff-base intermediate with substrate; via pyruvic acid) is an active-site residue. Position 25 is a pyruvic acid (Ser) (Ser-25). Thr-57 provides a ligand contact to substrate. Catalysis depends on Tyr-58, which acts as the Proton donor. Residue 73 to 75 (GAA) participates in substrate binding.

This sequence belongs to the PanD family. Heterooctamer of four alpha and four beta subunits. The cofactor is pyruvate. In terms of processing, is synthesized initially as an inactive proenzyme, which is activated by self-cleavage at a specific serine bond to produce a beta-subunit with a hydroxyl group at its C-terminus and an alpha-subunit with a pyruvoyl group at its N-terminus.

It localises to the cytoplasm. It catalyses the reaction L-aspartate + H(+) = beta-alanine + CO2. Its pathway is cofactor biosynthesis; (R)-pantothenate biosynthesis; beta-alanine from L-aspartate: step 1/1. Its function is as follows. Catalyzes the pyruvoyl-dependent decarboxylation of aspartate to produce beta-alanine. In Psychrobacter arcticus (strain DSM 17307 / VKM B-2377 / 273-4), this protein is Aspartate 1-decarboxylase.